A 415-amino-acid chain; its full sequence is AP-3 complex subunit mu (415 aa).

The region spanning 178–414 (SNEVYVDLVE…QTRAGEFDVR (237 aa)) is the MHD domain.

The protein belongs to the adaptor complexes medium subunit family. Adaptor protein complex 3 (AP-3) is a heterotetramer composed of two large adaptins (delta-type subunit and beta-type subunit), a medium adaptin (mu-type subunit) and a small adaptin (sigma-type subunit).

The protein localises to the cytoplasm. The protein resides in the golgi apparatus. It is found in the cytoplasmic vesicle membrane. Part of the AP-3 complex, an adaptor-related complex which seems to be clathrin-associated. The complex is associated with the Golgi region as well as more peripheral structures. It facilitates the budding of vesicles from the Golgi membrane and may be directly involved in trafficking to the vacuole. It also functions in maintaining the identity of lytic vacuoles and in regulating the transition between storage and lytic vacuoles. This is AP-3 complex subunit mu (AP3M) from Arabidopsis thaliana (Mouse-ear cress).